A 184-amino-acid polypeptide reads, in one-letter code: MKNLTDSFVYLGHWPSAGSFGFNTDILATNPINLSVVFGVLIFFGKGVLNDLLDNRKQRILNTIRNSEELREGAIQQLENARARLRKVETEADQFRVNGYSEIEREKLNLINSTYKTLKQLENYKNETILFEQQRTINQVRERVFQQALQGAIGTLNSCLSNELHLRTINANIGMFGTMKEITD.

A helical transmembrane segment spans residues 27 to 49 (LATNPINLSVVFGVLIFFGKGVL).

This sequence belongs to the ATPase B chain family. In terms of assembly, F-type ATPases have 2 components, F(1) - the catalytic core - and F(0) - the membrane proton channel. F(1) has five subunits: alpha(3), beta(3), gamma(1), delta(1), epsilon(1). F(0) has four main subunits: a(1), b(1), b'(1) and c(10-14). The alpha and beta chains form an alternating ring which encloses part of the gamma chain. F(1) is attached to F(0) by a central stalk formed by the gamma and epsilon chains, while a peripheral stalk is formed by the delta, b and b' chains.

The protein resides in the plastid. The protein localises to the chloroplast thylakoid membrane. F(1)F(0) ATP synthase produces ATP from ADP in the presence of a proton or sodium gradient. F-type ATPases consist of two structural domains, F(1) containing the extramembraneous catalytic core and F(0) containing the membrane proton channel, linked together by a central stalk and a peripheral stalk. During catalysis, ATP synthesis in the catalytic domain of F(1) is coupled via a rotary mechanism of the central stalk subunits to proton translocation. Functionally, component of the F(0) channel, it forms part of the peripheral stalk, linking F(1) to F(0). The sequence is that of ATP synthase subunit b, chloroplastic from Nasturtium officinale (Watercress).